Reading from the N-terminus, the 63-residue chain is Keratin-associated protein 8-1 (63 aa).

The tract at residues Pro-12 to Tyr-54 is 12 X 2 AA repeats of G-[YCGS].

Belongs to the KRTAP type 8 family. In terms of assembly, interacts with hair keratins. In terms of tissue distribution, is essentially restricted to only one vertical half of the hair forming compartment and in beard hairs is absent from the central medulla.

In terms of biological role, in the hair cortex, hair keratin intermediate filaments are embedded in an interfilamentous matrix, consisting of hair keratin-associated proteins (KRTAP), which are essential for the formation of a rigid and resistant hair shaft through their extensive disulfide bond cross-linking with abundant cysteine residues of hair keratins. The matrix proteins include the high-sulfur and high-glycine-tyrosine keratins. This is Keratin-associated protein 8-1 (KRTAP8-1) from Homo sapiens (Human).